A 704-amino-acid polypeptide reads, in one-letter code: ATP-dependent DNA helicase Hel308 (704 aa).

Residues Gln31 and 49–56 (SPTASGKT) contribute to the ATP site. Positions 36-200 (RKGLLDGKRL…WLNAELVATN (165 aa)) constitute a Helicase ATP-binding domain. The short motif at 148 to 151 (DEFH) is the DEAH box element. Residues 235-439 (AIIAYTLDIV…AFYSFLISII (205 aa)) enclose the Helicase C-terminal domain. Positions 366 to 645 (VVGYMDLIPV…LHARVKDGVK (280 aa)) are binds Hjc. Residues 432–644 (YSFLISIIAS…ELHARVKDGV (213 aa)) form a required for helicase activity region. The inhibits intrinsic ATPase, and helicase stretch occupies residues 646–704 (PELIELVKIPGIGRVRARLLYQHDIKKPEDIVLNPEKVKQLLGPNLGEKIVREAARTIA).

It belongs to the helicase family. Hel308 subfamily. Monomer; forms a 1:2 complex with Hjc, which may form a complex with Holliday junction DNA. Mg(2+) serves as cofactor.

The catalysed reaction is Couples ATP hydrolysis with the unwinding of duplex DNA by translocating in the 3'-5' direction.. The enzyme catalyses ATP + H2O = ADP + phosphate + H(+). It catalyses the reaction Couples ATP hydrolysis with the unwinding of duplex DNA at the replication fork by translocating in the 5'-3' direction. This creates two antiparallel DNA single strands (ssDNA). The leading ssDNA polymer is the template for DNA polymerase III holoenzyme which synthesizes a continuous strand.. Helicase activity is inhibited by Hjc and by PCNA123 and PCNA323. Functionally, an ATP, Mg(2+)-dependent DNA 3'-5' and 5'-3' helicase that may be involved in repair of stalled replication forks. Stimulated by both ss and dsDNA. Unwinds both leading and lagging strands in replication fork structures, unlike orthologs in P.furiosus and M.thermautotrophicus which only unwind the lagging strand and only have 3'-5' helicase activity. Preferentially binds dsDNA with overhangs or branched DNA. Able to anneal DNA substrates that could form a replication fork-like structure, has replication fork reversal activity (at least in vitro). The sequence is that of ATP-dependent DNA helicase Hel308 from Sulfurisphaera tokodaii (strain DSM 16993 / JCM 10545 / NBRC 100140 / 7) (Sulfolobus tokodaii).